A 133-amino-acid polypeptide reads, in one-letter code: Large ribosomal subunit protein uL15 (133 aa).

The segment at 1–58 (MALQNLTPAPGSTHATKRLGRGQGSGNGKTAGKGNKGQRARKGYNEKRGFEGGQQPLQ) is disordered. Residues 21-35 (RGQGSGNGKTAGKGN) show a composition bias toward gly residues.

The protein belongs to the universal ribosomal protein uL15 family. As to quaternary structure, part of the 50S ribosomal subunit.

In terms of biological role, binds to the 23S rRNA. This is Large ribosomal subunit protein uL15 from Campylobacter curvus (strain 525.92).